The following is a 592-amino-acid chain: E3 ubiquitin-protein ligase RNF180 (592 aa).

The Cytoplasmic portion of the chain corresponds to 1–564 (MKRSKELITK…DSRGWWFDMD (564 aa)). Ser230 is modified (phosphoserine). Residues 432–474 (CAVCLDVYFNPYMCYPCRHIFCEPCLRTLAKDNPSSTPCPLCR) form an RING-type zinc finger. Residues 565-585 (MVIIYIYSVNWVIGFIVFCFL) form a helical membrane-spanning segment. Over 586–592 (CYFFFPF) the chain is Extracellular.

In terms of assembly, interacts with ZIC2.

The protein resides in the endoplasmic reticulum membrane. It localises to the nucleus envelope. The enzyme catalyses S-ubiquitinyl-[E2 ubiquitin-conjugating enzyme]-L-cysteine + [acceptor protein]-L-lysine = [E2 ubiquitin-conjugating enzyme]-L-cysteine + N(6)-ubiquitinyl-[acceptor protein]-L-lysine.. Its pathway is protein modification; protein ubiquitination. E3 ubiquitin-protein ligase which promotes polyubiquitination and degradation by the proteasome pathway of ZIC2. This is E3 ubiquitin-protein ligase RNF180 (RNF180) from Pongo abelii (Sumatran orangutan).